The chain runs to 201 residues: UPF0301 protein Mvan_6057 (201 aa).

Belongs to the UPF0301 (AlgH) family.

This is UPF0301 protein Mvan_6057 from Mycolicibacterium vanbaalenii (strain DSM 7251 / JCM 13017 / BCRC 16820 / KCTC 9966 / NRRL B-24157 / PYR-1) (Mycobacterium vanbaalenii).